Here is a 484-residue protein sequence, read N- to C-terminus: AMP nucleosidase (484 aa).

It belongs to the AMP nucleosidase family.

It catalyses the reaction AMP + H2O = adenine + D-ribose 5-phosphate. Catalyzes the hydrolysis of the N-glycosidic bond of AMP to form adenine and ribose 5-phosphate. Involved in regulation of AMP concentrations. The polypeptide is AMP nucleosidase (Escherichia coli O157:H7).